We begin with the raw amino-acid sequence, 224 residues long: Flagellar L-ring protein (224 aa).

The first 15 residues, 1–15 (MARYLVLAVALLLAA), serve as a signal peptide directing secretion. Residue C16 is the site of N-palmitoyl cysteine attachment. Residue C16 is the site of S-diacylglycerol cysteine attachment.

Belongs to the FlgH family. The basal body constitutes a major portion of the flagellar organelle and consists of four rings (L,P,S, and M) mounted on a central rod.

The protein localises to the cell outer membrane. It localises to the bacterial flagellum basal body. In terms of biological role, assembles around the rod to form the L-ring and probably protects the motor/basal body from shearing forces during rotation. The polypeptide is Flagellar L-ring protein (Shewanella baltica (strain OS223)).